Here is a 64-residue protein sequence, read N- to C-terminus: Large ribosomal subunit protein bL35 (64 aa).

A disordered region spans residues 1–23; sequence MPKMKTHRGAAKRFKKTKNKIKR.

It belongs to the bacterial ribosomal protein bL35 family.

The sequence is that of Large ribosomal subunit protein bL35 from Nitratiruptor sp. (strain SB155-2).